The sequence spans 141 residues: Ribosome-binding factor A (141 aa).

This sequence belongs to the RbfA family. Monomer. Binds 30S ribosomal subunits, but not 50S ribosomal subunits or 70S ribosomes.

The protein resides in the cytoplasm. Functionally, one of several proteins that assist in the late maturation steps of the functional core of the 30S ribosomal subunit. Associates with free 30S ribosomal subunits (but not with 30S subunits that are part of 70S ribosomes or polysomes). Required for efficient processing of 16S rRNA. May interact with the 5'-terminal helix region of 16S rRNA. The chain is Ribosome-binding factor A from Maricaulis maris (strain MCS10) (Caulobacter maris).